The sequence spans 93 residues: Stromal cell-derived factor 1 (93 aa).

A signal peptide spans 1–21; sequence MDAKVVAVLALVLAALCISDG. Residues 22 to 23 carry the Receptor activation motif motif; sequence KP. Positions 29 to 33 are receptor and heparin binding; sequence RCPCR. Cystine bridges form between Cys-30-Cys-55 and Cys-32-Cys-71. Receptor binding stretches follow at residues 39–41, 48–50, and 60–70; these read IAR, KIL, and VARLKNNNRQV. Residues 41-51, Arg-62, Gln-69, and Lys-85 contribute to the heparin site; that span reads RANVKHLKILN.

It belongs to the intercrine alpha (chemokine CxC) family. In terms of assembly, monomer or homodimer; in equilibrium. Dimer formation is induced by non acidic pH and the presence of multivalent anions, and by binding to CXCR4 or heparin. Monomeric form is required for full chemotactic activity and resistance to ischemia/reperfusion injury, whereas the dimeric form acts as a partial agonist of CXCR4, stimulating Ca2+ mobilization but with no chemotactic activity and instead acts as a selective antagonist that blocks chemotaxis induced by the monomeric form. Interacts with the N-terminus of ACKR3. Interacts with integrin subunit ITGB3 (via the allosteric site (site 2)). Interacts with TNFAIP6 (via Link domain). As to expression, highest expression levels detected in kidney, liver, spleen and muscle. Isoform Alpha is expressed ubiquitously but at varying levels, while isoform Beta displays tissue-specific expression, with expression detected in kidney, liver, heart, spleen and muscle but not in lung, colon, brain, skin and stomach.

It localises to the secreted. Chemoattractant active on T-lymphocytes and monocytes but not neutrophils. Activates the C-X-C chemokine receptor CXCR4 to induce a rapid and transient rise in the level of intracellular calcium ions and chemotaxis. Also binds to atypical chemokine receptor ACKR3, which activates the beta-arrestin pathway and acts as a scavenger receptor for SDF-1. Binds to the allosteric site (site 2) of integrins and activates integrins ITGAV:ITGB3, ITGA4:ITGB1 and ITGA5:ITGB1 in a CXCR4-independent manner. Acts as a positive regulator of monocyte migration and a negative regulator of monocyte adhesion via the LYN kinase. Stimulates migration of monocytes and T-lymphocytes through its receptors, CXCR4 and ACKR3, and decreases monocyte adherence to surfaces coated with ICAM-1, a ligand for beta-2 integrins. SDF1A/CXCR4 signaling axis inhibits beta-2 integrin LFA-1 mediated adhesion of monocytes to ICAM-1 through LYN kinase. Plays a protective role after myocardial infarction. Induces down-regulation and internalization of ACKR3 expressed in various cells. Has several critical functions during embryonic development; required for B-cell lymphopoiesis, myelopoiesis in bone marrow and heart ventricular septum formation. Stimulates the proliferation of bone marrow-derived B-cell progenitors in the presence of IL7 as well as growth of stromal cell-dependent pre-B-cells. The chain is Stromal cell-derived factor 1 (Cxcl12) from Mus musculus (Mouse).